The primary structure comprises 101 residues: A-type ATP synthase subunit F (101 aa).

This sequence belongs to the V-ATPase F subunit family. Has multiple subunits with at least A(3), B(3), C, D, E, F, H, I and proteolipid K(x).

It is found in the cell membrane. Its function is as follows. Component of the A-type ATP synthase that produces ATP from ADP in the presence of a proton gradient across the membrane. In Archaeoglobus fulgidus (strain ATCC 49558 / DSM 4304 / JCM 9628 / NBRC 100126 / VC-16), this protein is A-type ATP synthase subunit F.